The sequence spans 223 residues: Homeobox protein egl-5 (223 aa).

The span at 1–25 (MNTSTSAFDFGSSTASSAATSTTSS) shows a compositional bias: low complexity. Disordered stretches follow at residues 1–58 (MNTS…STEA) and 168–191 (KKEK…PPKG). The homeobox DNA-binding region spans 112–171 (SKKGRQTYQRYQTSVLEAKFQQSSYVSKKQREELRLQTQLTDRQIKIWFQNRRMKAKKEK).

It belongs to the Abd-B homeobox family. Interacts with the TCF transcription factor pop-1.

It is found in the nucleus. In terms of biological role, involved in control of cell fate and pattern formation along the anterior-posterior axis, acting mainly in the tail. Required during embryonic and postembryonic development. Essential for the determination of specific neurons, including the PLM touch neurons. Plays a role in neural fate specification in the hermaphrodite-specific neuron (HSN)/PHB neuron lineage, acting in concert with T-box protein tbx-2 and the asymmetric cell division protein ham-1. Required for male gonadal fate determination, acting in parallel with a WNT/beta-catenin pathway, perhaps by recruiting pop-1 to male-specific gonadal target genes. Involved in development of the hermaphrodite hindgut, and for the response to rectal infection by the coryneform bacterium M.nematophilum. This is Homeobox protein egl-5 from Caenorhabditis elegans.